The following is an 83-amino-acid chain: Large ribosomal subunit protein eL31 (83 aa).

It belongs to the eukaryotic ribosomal protein eL31 family.

The sequence is that of Large ribosomal subunit protein eL31 from Methanococcus aeolicus (strain ATCC BAA-1280 / DSM 17508 / OCM 812 / Nankai-3).